A 516-amino-acid chain; its full sequence is Amino-acid permease BAT1 (516 aa).

A run of 12 helical transmembrane segments spans residues 33–53, 70–90, 113–133, 164–184, 189–209, 232–252, 275–295, 328–348, 383–403, 406–426, 452–472, and 483–503; these read LSVF…TGIT, YGWF…AEIC, PLAS…VTAS, VVIG…SLPI, FIGQ…MILI, LGIT…QYTI, GIIS…LGIS, FGSG…VFFC, VPIN…LTSL, IVAF…AYAI, VVGW…SLPV, and YTPV…LFSA.

Belongs to the amino acid-polyamine-organocation (APC) superfamily. Amino acid/choline transporter (ACT) (TC 2.A.3.4) family. Expressed in roots, rosette leaves, stems, cauline leaves, flowers and siliques.

Its subcellular location is the mitochondrion membrane. Its function is as follows. May play a role in primary carbon metabolism and plant growth, by mediating the transport of GABA from the cytosol to mitochondria. When expressed in a heterologous system (yeast), imports Arg and Ala across the plasma membrane and exports Lys and Glu, but does not transport proline. This Arabidopsis thaliana (Mouse-ear cress) protein is Amino-acid permease BAT1 (BAT1).